A 176-amino-acid polypeptide reads, in one-letter code: RNA pyrophosphohydrolase (176 aa).

Positions 6 to 149 constitute a Nudix hydrolase domain; sequence GYRPNVGIVI…KRDVYRRVMK (144 aa). The Nudix box motif lies at 38–59; the sequence is GGINPGESAEQAMYRELFEEVG.

This sequence belongs to the Nudix hydrolase family. RppH subfamily. Requires a divalent metal cation as cofactor.

In terms of biological role, accelerates the degradation of transcripts by removing pyrophosphate from the 5'-end of triphosphorylated RNA, leading to a more labile monophosphorylated state that can stimulate subsequent ribonuclease cleavage. This chain is RNA pyrophosphohydrolase, found in Klebsiella pneumoniae (strain 342).